A 64-amino-acid chain; its full sequence is Large ribosomal subunit protein uL29 (64 aa).

The protein belongs to the universal ribosomal protein uL29 family.

The polypeptide is Large ribosomal subunit protein uL29 (Porphyromonas gingivalis (strain ATCC 33277 / DSM 20709 / CIP 103683 / JCM 12257 / NCTC 11834 / 2561)).